The chain runs to 174 residues: MSLNRNEKEAVVAQVSAQVAKAQTLALAEYRGLTVEHLNALRKQAREKGVYLHVLKNTLARRAVAGTSFEVAAGSMAGPLIYGFSEDAVAAAKVIADFAKGNDKLVIKAGAYAGKALDAEGVKALASIPSKEVLLSQLLGLMQSPVSRIARVLAALAEQRGGSAEAAPAEAAAA.

The protein belongs to the universal ribosomal protein uL10 family. In terms of assembly, part of the ribosomal stalk of the 50S ribosomal subunit. The N-terminus interacts with L11 and the large rRNA to form the base of the stalk. The C-terminus forms an elongated spine to which L12 dimers bind in a sequential fashion forming a multimeric L10(L12)X complex.

Its function is as follows. Forms part of the ribosomal stalk, playing a central role in the interaction of the ribosome with GTP-bound translation factors. The protein is Large ribosomal subunit protein uL10 of Methylibium petroleiphilum (strain ATCC BAA-1232 / LMG 22953 / PM1).